The following is a 547-amino-acid chain: Probable FMN/FAD exporter YeeO (547 aa).

The next 11 membrane-spanning stretches (helical) occupy residues 94–114 (ITPL…MGVL), 139–159 (VIMA…AFSL), 174–194 (SLVI…HFGE), 211–231 (LALT…ITLI), 246–268 (LLIN…YGLF), 281–301 (GLTI…AIGF), 318–338 (FSII…SVLF), 350–370 (AGMG…AALI), 404–424 (VFWL…PFAG), 439–459 (VVVI…ASWV), and 486–506 (VVVG…VWMG).

This sequence belongs to the multi antimicrobial extrusion (MATE) (TC 2.A.66.1) family.

It is found in the cell inner membrane. Its function is as follows. A transporter able to export peptides and flavins. When overexpressed allows cells deleted for multiple peptidases (pepA, pepB, pepD and pepN) to grow in the presence of dipeptides Ala-Gln or Gly-Tyr which otherwise inhibit growth. Cells overexpressing this protein have decreased intracellular levels of Ala-Gln dipeptide, and in a system that produces the Ala-Gln dipeptide, overproduction of this protein increases its export. When overexpressed increases secretion of FMN and FAD but not riboflavin; intracellular concentrations of FMN and riboflavin rise, possibly to compensate for increased secretion. Increased overexpression causes slight cell elongation. This chain is Probable FMN/FAD exporter YeeO (yeeO), found in Escherichia coli (strain K12).